The sequence spans 251 residues: Pyrroloquinoline-quinone synthase (251 aa).

This sequence belongs to the PqqC family.

The catalysed reaction is 6-(2-amino-2-carboxyethyl)-7,8-dioxo-1,2,3,4,7,8-hexahydroquinoline-2,4-dicarboxylate + 3 O2 = pyrroloquinoline quinone + 2 H2O2 + 2 H2O + H(+). It functions in the pathway cofactor biosynthesis; pyrroloquinoline quinone biosynthesis. Ring cyclization and eight-electron oxidation of 3a-(2-amino-2-carboxyethyl)-4,5-dioxo-4,5,6,7,8,9-hexahydroquinoline-7,9-dicarboxylic-acid to PQQ. The polypeptide is Pyrroloquinoline-quinone synthase (Pseudomonas putida (strain W619)).